Here is a 584-residue protein sequence, read N- to C-terminus: 2-succinyl-5-enolpyruvyl-6-hydroxy-3-cyclohexene-1-carboxylate synthase (584 aa).

This sequence belongs to the TPP enzyme family. MenD subfamily. In terms of assembly, homodimer. Mg(2+) serves as cofactor. Mn(2+) is required as a cofactor. Requires thiamine diphosphate as cofactor.

It catalyses the reaction isochorismate + 2-oxoglutarate + H(+) = 5-enolpyruvoyl-6-hydroxy-2-succinyl-cyclohex-3-ene-1-carboxylate + CO2. Its pathway is quinol/quinone metabolism; 1,4-dihydroxy-2-naphthoate biosynthesis; 1,4-dihydroxy-2-naphthoate from chorismate: step 2/7. It participates in quinol/quinone metabolism; menaquinone biosynthesis. In terms of biological role, catalyzes the thiamine diphosphate-dependent decarboxylation of 2-oxoglutarate and the subsequent addition of the resulting succinic semialdehyde-thiamine pyrophosphate anion to isochorismate to yield 2-succinyl-5-enolpyruvyl-6-hydroxy-3-cyclohexene-1-carboxylate (SEPHCHC). The sequence is that of 2-succinyl-5-enolpyruvyl-6-hydroxy-3-cyclohexene-1-carboxylate synthase from Bacillus thuringiensis (strain Al Hakam).